The primary structure comprises 223 residues: Probable transaldolase (223 aa).

Lys-86 functions as the Schiff-base intermediate with substrate in the catalytic mechanism.

This sequence belongs to the transaldolase family. Type 3B subfamily.

Its subcellular location is the cytoplasm. The enzyme catalyses D-sedoheptulose 7-phosphate + D-glyceraldehyde 3-phosphate = D-erythrose 4-phosphate + beta-D-fructose 6-phosphate. The protein operates within carbohydrate degradation; pentose phosphate pathway; D-glyceraldehyde 3-phosphate and beta-D-fructose 6-phosphate from D-ribose 5-phosphate and D-xylulose 5-phosphate (non-oxidative stage): step 2/3. Its function is as follows. Transaldolase is important for the balance of metabolites in the pentose-phosphate pathway. The sequence is that of Probable transaldolase (tal) from Thermoplasma acidophilum (strain ATCC 25905 / DSM 1728 / JCM 9062 / NBRC 15155 / AMRC-C165).